Reading from the N-terminus, the 280-residue chain is UDP-3-O-acyl-N-acetylglucosamine deacetylase (280 aa).

Residues His-77, His-238, and Asp-242 each coordinate Zn(2+). His-265 serves as the catalytic Proton donor.

Belongs to the LpxC family. Zn(2+) is required as a cofactor.

The catalysed reaction is a UDP-3-O-[(3R)-3-hydroxyacyl]-N-acetyl-alpha-D-glucosamine + H2O = a UDP-3-O-[(3R)-3-hydroxyacyl]-alpha-D-glucosamine + acetate. It participates in glycolipid biosynthesis; lipid IV(A) biosynthesis; lipid IV(A) from (3R)-3-hydroxytetradecanoyl-[acyl-carrier-protein] and UDP-N-acetyl-alpha-D-glucosamine: step 2/6. In terms of biological role, catalyzes the hydrolysis of UDP-3-O-myristoyl-N-acetylglucosamine to form UDP-3-O-myristoylglucosamine and acetate, the committed step in lipid A biosynthesis. The polypeptide is UDP-3-O-acyl-N-acetylglucosamine deacetylase (Nostoc sp. (strain PCC 7120 / SAG 25.82 / UTEX 2576)).